The primary structure comprises 314 residues: Electron transfer flavoprotein subunit alpha (314 aa).

FAD is bound at residue 253-281; sequence LYVAVGISGAIQHLAGMKDSKVIVAINKD.

Belongs to the ETF alpha-subunit/FixB family. As to quaternary structure, heterodimer of an alpha and a beta subunit. FAD is required as a cofactor.

Functionally, the electron transfer flavoprotein serves as a specific electron acceptor for other dehydrogenases. It transfers the electrons to the main respiratory chain via ETF-ubiquinone oxidoreductase (ETF dehydrogenase). The polypeptide is Electron transfer flavoprotein subunit alpha (etfA) (Bradyrhizobium diazoefficiens (strain JCM 10833 / BCRC 13528 / IAM 13628 / NBRC 14792 / USDA 110)).